The primary structure comprises 379 residues: Zinc metalloproteinase nas-20 (379 aa).

Residues 1 to 20 (MKITVNFLLVALIGVPSVLS) form the signal peptide. Positions 21–29 (DRHITRDKR) are excised as a propeptide. Residues 30–208 (QAMRDYAKWE…VLLNKFYGCN (179 aa)) form the Peptidase M12A domain. N-linked (GlcNAc...) asparagine glycosylation occurs at Asn-67. Disulfide bonds link Cys-70–Cys-207, Cys-91–Cys-111, Cys-209–Cys-229, and Cys-234–Cys-243. His-119 serves as a coordination point for Zn(2+). The active site involves Glu-120. His-123 and His-129 together coordinate Zn(2+). N-linked (GlcNAc...) asparagine glycosylation is present at Asn-185. An EGF-like domain is found at 203–244 (KFYGCNCDNHPRKLDCKNGGYQNPANCEECLCTDGFNGQLCD). Residues Asn-337 and Asn-370 are each glycosylated (N-linked (GlcNAc...) asparagine).

Zn(2+) is required as a cofactor.

It is found in the secreted. Metalloprotease. This Caenorhabditis elegans protein is Zinc metalloproteinase nas-20 (nas-20).